The following is a 446-amino-acid chain: Adenylosuccinate synthetase (446 aa).

Residues 20-26 (GDEGKGK) and 48-50 (GHT) each bind GTP. Asp21 functions as the Proton acceptor in the catalytic mechanism. Mg(2+) contacts are provided by Asp21 and Gly48. IMP is bound by residues 21–24 (DEGK), 46–49 (NAGH), Thr137, Arg151, Gln232, Thr247, and Arg319. Catalysis depends on His49, which acts as the Proton donor. 315 to 321 (SVTGRPR) lines the substrate pocket. GTP is bound by residues Arg321, 347-349 (KLD), and 429-431 (STG).

This sequence belongs to the adenylosuccinate synthetase family. In terms of assembly, homodimer. It depends on Mg(2+) as a cofactor.

It localises to the cytoplasm. The enzyme catalyses IMP + L-aspartate + GTP = N(6)-(1,2-dicarboxyethyl)-AMP + GDP + phosphate + 2 H(+). Its pathway is purine metabolism; AMP biosynthesis via de novo pathway; AMP from IMP: step 1/2. Plays an important role in the de novo pathway of purine nucleotide biosynthesis. Catalyzes the first committed step in the biosynthesis of AMP from IMP. This chain is Adenylosuccinate synthetase, found in Polynucleobacter asymbioticus (strain DSM 18221 / CIP 109841 / QLW-P1DMWA-1) (Polynucleobacter necessarius subsp. asymbioticus).